Consider the following 79-residue polypeptide: uncharacterized protein (79 aa).

Residues 22–72 show a composition bias toward low complexity; sequence NNNNNNNNNNNNNNNNNNNNNNNNNNNNNNNNNNNNNNNNNNNNNNNNNNN. The interval 22–79 is disordered; that stretch reads NNNNNNNNNNNNNNNNNNNNNNNNNNNNNNNNNNNNNNNNNNNNNNNNNNNKRFFFFG.

This is an uncharacterized protein from Dictyostelium discoideum (Social amoeba).